The primary structure comprises 545 residues: Lysine--tRNA ligase (545 aa).

A 'HIGH' region motif is present at residues proline 42–histidine 50. The 'KMSKS' region motif lies at proline 307 to serine 311.

This sequence belongs to the class-I aminoacyl-tRNA synthetase family.

The protein localises to the cytoplasm. It carries out the reaction tRNA(Lys) + L-lysine + ATP = L-lysyl-tRNA(Lys) + AMP + diphosphate. The polypeptide is Lysine--tRNA ligase (Haloarcula marismortui (strain ATCC 43049 / DSM 3752 / JCM 8966 / VKM B-1809) (Halobacterium marismortui)).